The following is a 209-amino-acid chain: Kynurenine formamidase (209 aa).

W19 contacts substrate. 3 residues coordinate Zn(2+): H49, H53, and D55. The active-site Proton donor/acceptor is the H59. Zn(2+) is bound by residues H160 and E172.

Belongs to the Cyclase 1 superfamily. KynB family. In terms of assembly, homodimer. It depends on Zn(2+) as a cofactor.

It carries out the reaction N-formyl-L-kynurenine + H2O = L-kynurenine + formate + H(+). Its pathway is amino-acid degradation; L-tryptophan degradation via kynurenine pathway; L-kynurenine from L-tryptophan: step 2/2. Its function is as follows. Catalyzes the hydrolysis of N-formyl-L-kynurenine to L-kynurenine, the second step in the kynurenine pathway of tryptophan degradation. The chain is Kynurenine formamidase from Geobacillus thermodenitrificans (strain NG80-2).